Here is a 482-residue protein sequence, read N- to C-terminus: Ras GTPase-activating protein-binding protein 2 (482 aa).

Residues 11 to 133 (VGREFVRQYY…FYVHNDMFRY (123 aa)) form the NTF2 domain. Positions 140 to 158 (DSEPELDEESEDEVEEEQE) are enriched in acidic residues. Disordered stretches follow at residues 140-171 (DSEPELDEESEDEVEEEQEERQPSPEPVQENA) and 187-318 (EPLE…EQND). Phosphoserine is present on residues Ser141, Ser149, and Ser225. An acidic disordered region region spans residues 142-220 (EPELDEESED…PQVEEKNLEE (79 aa)). Positions 191–225 (ESSHEPEPEPESETKTEELKPQVEEKNLEELEEKS) are enriched in basic and acidic residues. At Thr227 the chain carries Phosphothreonine. At Ser235 the chain carries Phosphoserine. The span at 247 to 264 (ASVTSKNLPPSGTVSSSG) shows a compositional bias: polar residues. Residue Lys281 forms a Glycyl lysine isopeptide (Lys-Gly) (interchain with G-Cter in SUMO2) linkage. Over residues 290 to 300 (RVREQRPRERP) the composition is skewed to basic and acidic residues. Residues 331 to 409 (HQLFVGNLPH…VRLNVEEKKT (79 aa)) enclose the RRM domain. N6-succinyllysine is present on Lys392. Residues 404 to 476 (VEEKKTRAAR…GRGTGQMEGR (73 aa)) form an RG-rich region region. Positions 408 to 432 (KTRAARERETRGGGDDRRDIRRNDR) are enriched in basic and acidic residues. The disordered stretch occupies residues 408-482 (KTRAARERET…MEGRFTGQRR (75 aa)). Over residues 433 to 445 (GPGGPRGIVGGGM) the composition is skewed to gly residues. Residue Arg457 is modified to Omega-N-methylarginine. Ser466 bears the Phosphoserine mark. Position 468 is an omega-N-methylarginine (Arg468).

Forms homooligomers. Forms heterodimers with G3BP1. Interacts with NFKBIA (via N-terminus). Interacts (via NTF2 domain) with USP10; inhibiting stress granule formation. Interacts (via NTF2 domain) with CAPRIN1; promoting stress granule formation. Associates (via RG-rich region) with 40S ribosome subunits. Interacts with PABPC1. In terms of assembly, (Microbial infection) Interacts with non-structural protein 3 (via C-terminus) of Sindbis virus and Semliki forest virus; this interaction inhibits the formation of host stress granules on viral mRNAs and the nsp3-G3BP2 complexes bind viral RNAs and probably orchestrate the assembly of viral replication complexes. (Microbial infection) Cleaved by foot-and-mouth disease virus leader protease; this cleavage suppresses the formation of cytoplasmic stress granules.

It localises to the cytoplasm. The protein localises to the stress granule. Its activity is regulated as follows. Under physiological conditions, G3BP2 adopts a compact state that is stabilized by intramolecular interactions between the RG-rich and the acidic regions that inhibit phase separation. Upon stress, polysomes disassemble and mRNAs are released in an unfolded protein-free state. Binding of unfolded mRNA to G3BP2 outcompetes the intramolecular interactions and RNA-bound G3BP2 adopts an expanded conformation in which the RG-rich region becomes exposed to engage in protein-protein and protein-RNA interactions, allowing physical cross-linking of RNA molecules to form protein-RNA condensates, leading to liquid-liquid phase separation (LLPS). In terms of biological role, scaffold protein that plays an essential role in cytoplasmic stress granule formation which acts as a platform for antiviral signaling. Plays an essential role in stress granule formation. Stress granules are membraneless compartments that store mRNAs and proteins, such as stalled translation pre-initiation complexes, in response to stress. Promotes formation of stress granules phase-separated membraneless compartment by undergoing liquid-liquid phase separation (LLPS) upon unfolded RNA-binding: functions as a molecular switch that triggers RNA-dependent LLPS in response to a rise in intracellular free RNA concentrations. This Homo sapiens (Human) protein is Ras GTPase-activating protein-binding protein 2.